The following is a 307-amino-acid chain: Acetyl-coenzyme A carboxylase carboxyl transferase subunit beta (307 aa).

Residues 25–294 (LWIKDPESGE…TEENGSRRLP (270 aa)) form the CoA carboxyltransferase N-terminal domain.

Belongs to the AccD/PCCB family. Acetyl-CoA carboxylase is a heterohexamer composed of biotin carboxyl carrier protein (AccB), biotin carboxylase (AccC) and two subunits each of ACCase subunit alpha (AccA) and ACCase subunit beta (AccD).

It is found in the cytoplasm. The catalysed reaction is N(6)-carboxybiotinyl-L-lysyl-[protein] + acetyl-CoA = N(6)-biotinyl-L-lysyl-[protein] + malonyl-CoA. It functions in the pathway lipid metabolism; malonyl-CoA biosynthesis; malonyl-CoA from acetyl-CoA: step 1/1. In terms of biological role, component of the acetyl coenzyme A carboxylase (ACC) complex. Biotin carboxylase (BC) catalyzes the carboxylation of biotin on its carrier protein (BCCP) and then the CO(2) group is transferred by the transcarboxylase to acetyl-CoA to form malonyl-CoA. The polypeptide is Acetyl-coenzyme A carboxylase carboxyl transferase subunit beta (Chelativorans sp. (strain BNC1)).